A 447-amino-acid chain; its full sequence is Chaperone protein dnaJ A7B, chloroplastic (447 aa).

The N-terminal 86 residues, 1 to 86 (MALLQFGGTL…HRRSSRFIVR (86 aa)), are a transit peptide targeting the chloroplast. Residues 90–154 (DFYSTLGVSR…EKRSIYDKYG (65 aa)) form the J domain. Residues 217 to 298 (GVEKEIEITR…CGGDGRVRKT (82 aa)) form a CR-type zinc finger. The Zn(2+) site is built by cysteine 230, cysteine 233, cysteine 247, cysteine 250, cysteine 273, cysteine 276, cysteine 286, and cysteine 289. CXXCXGXG motif repeat units lie at residues 230-237 (CNTCDGTG), 247-254 (CKTCGGQG), 273-280 (CNTCGGTG), and 286-293 (CNTCGGDG).

Belongs to the DnaJ family. Interacts with PCNA. Expressed in roots, stems, leaves and panicles.

The protein localises to the plastid. It localises to the chloroplast. Plays pivotal roles in chloroplast development. Is essential for the regulation of chloroplast development and differentiation. This is Chaperone protein dnaJ A7B, chloroplastic from Oryza sativa subsp. japonica (Rice).